We begin with the raw amino-acid sequence, 131 residues long: Histone H2A (131 aa).

A disordered region spans residues 1–24 (MSSGGKGKASSETKSSSRSSKAGL). N6-acetyllysine occurs at positions 6 and 8. Positions 8-23 (KASSETKSSSRSSKAG) are enriched in low complexity. The residue at position 105 (Q105) is an N5-methylglutamine. S128 is modified (phosphoserine). Residues 128–129 (SQ) carry the [ST]-Q motif motif.

Belongs to the histone H2A family. As to quaternary structure, the nucleosome is a histone octamer containing two molecules each of H2A, H2B, H3 and H4 assembled in one H3-H4 heterotetramer and two H2A-H2B heterodimers. The octamer wraps approximately 147 bp of DNA. Phosphorylated to form H2AS128ph (gamma-H2A) in response to DNA double-strand breaks (DSBs) generated by exogenous genotoxic agents and by stalled replication forks. Phosphorylation is dependent on the DNA damage checkpoint kinases MEC1/ATR and TEL1/ATM, spreads on either side of a detected DSB site and may mark the surrounding chromatin for recruitment of proteins required for DNA damage signaling and repair. Gamma-H2A is removed from the DNA prior to the strand invasion-primer extension step of the repair process and subsequently dephosphorylated. Dephosphorylation is necessary for efficient recovery from the DNA damage checkpoint. In terms of processing, acetylated by ESA1 to form H2AK4ac and H2AK7ac.

The protein localises to the nucleus. The protein resides in the chromosome. Core component of nucleosome which plays a central role in DNA double strand break (DSB) repair. Nucleosomes wrap and compact DNA into chromatin, limiting DNA accessibility to the cellular machineries which require DNA as a template. Histones thereby play a central role in transcription regulation, DNA repair, DNA replication and chromosomal stability. DNA accessibility is regulated via a complex set of post-translational modifications of histones, also called histone code, and nucleosome remodeling. The protein is Histone H2A (HTA1) of Cryptococcus neoformans var. neoformans serotype D (strain B-3501A) (Filobasidiella neoformans).